A 475-amino-acid chain; its full sequence is Ribulose bisphosphate carboxylase large chain (475 aa).

The propeptide occupies 1 to 2 (MS). Proline 3 is modified (N-acetylproline). An N6,N6,N6-trimethyllysine modification is found at lysine 14. Residues asparagine 123 and threonine 173 each coordinate substrate. The Proton acceptor role is filled by lysine 175. Residue lysine 177 participates in substrate binding. Positions 201, 203, and 204 each coordinate Mg(2+). Position 201 is an N6-carboxylysine (lysine 201). Residue histidine 294 is the Proton acceptor of the active site. Substrate is bound by residues arginine 295, histidine 327, and serine 379.

This sequence belongs to the RuBisCO large chain family. Type I subfamily. In terms of assembly, heterohexadecamer of 8 large chains and 8 small chains; disulfide-linked. The disulfide link is formed within the large subunit homodimers. It depends on Mg(2+) as a cofactor. Post-translationally, the disulfide bond which can form in the large chain dimeric partners within the hexadecamer appears to be associated with oxidative stress and protein turnover.

Its subcellular location is the plastid. It localises to the chloroplast. The enzyme catalyses 2 (2R)-3-phosphoglycerate + 2 H(+) = D-ribulose 1,5-bisphosphate + CO2 + H2O. It catalyses the reaction D-ribulose 1,5-bisphosphate + O2 = 2-phosphoglycolate + (2R)-3-phosphoglycerate + 2 H(+). Its function is as follows. RuBisCO catalyzes two reactions: the carboxylation of D-ribulose 1,5-bisphosphate, the primary event in carbon dioxide fixation, as well as the oxidative fragmentation of the pentose substrate in the photorespiration process. Both reactions occur simultaneously and in competition at the same active site. This Larix occidentalis (Western larch) protein is Ribulose bisphosphate carboxylase large chain.